A 349-amino-acid chain; its full sequence is Phenylalanine--tRNA ligase alpha subunit (349 aa).

Residue Glu258 coordinates Mg(2+).

It belongs to the class-II aminoacyl-tRNA synthetase family. Phe-tRNA synthetase alpha subunit type 1 subfamily. As to quaternary structure, tetramer of two alpha and two beta subunits. The cofactor is Mg(2+).

Its subcellular location is the cytoplasm. The catalysed reaction is tRNA(Phe) + L-phenylalanine + ATP = L-phenylalanyl-tRNA(Phe) + AMP + diphosphate + H(+). The sequence is that of Phenylalanine--tRNA ligase alpha subunit from Rickettsia canadensis (strain McKiel).